A 348-amino-acid chain; its full sequence is Fasciculation and elongation protein zeta-2 (348 aa).

The segment at 11–40 (YEFQEPAGSVQEQENCNASPEAGAGAHAGG) is disordered. Ser130, Ser171, and Ser190 each carry phosphoserine. Residues 206–280 (ERVKRLSVSE…TAKKKKKLKS (75 aa)) adopt a coiled-coil conformation. The tract at residues 265-296 (QKEHKETAKKKKKLKSGSSQNGRSERSHMPGT) is disordered.

It belongs to the zygin family. Homodimer; disulfide-linked. May form heterodimers with FEZ1. Interacts with synaptotagmin.

Functionally, involved in axonal outgrowth and fasciculation. This is Fasciculation and elongation protein zeta-2 (Fez2) from Mus musculus (Mouse).